The following is a 216-amino-acid chain: Small ribosomal subunit protein uS3c (216 aa).

In terms of domain architecture, KH type-2 spans 43–118 (IKNYIQKNRR…RLKIAITRVE (76 aa)).

The protein belongs to the universal ribosomal protein uS3 family. In terms of assembly, part of the 30S ribosomal subunit.

Its subcellular location is the plastid. The protein localises to the chloroplast. In Dioscorea elephantipes (Elephant's foot yam), this protein is Small ribosomal subunit protein uS3c (rps3).